Consider the following 149-residue polypeptide: MNVFLSKYVNGVDKKSRVSVPANYRAVLGKELFNGVIAYPSIRNNCIEVCGISHIEKLRQMIETLDPYSEERDAFETMIFGEAVQLSFDGEGRVILPQSLMKHAGIEEQACFVGKGVIFEIWQPQNFEKYLNAAQKIAHEKRLTLRNAH.

2 consecutive SpoVT-AbrB domains span residues 7-54 (KYVN…GISH) and 83-126 (AVQL…QPQN).

This sequence belongs to the MraZ family. In terms of assembly, forms oligomers.

It localises to the cytoplasm. Its subcellular location is the nucleoid. This is Transcriptional regulator MraZ from Rickettsia conorii (strain ATCC VR-613 / Malish 7).